The following is a 166-amino-acid chain: MASGVAVSDGVIKVFNDMKVRKSSTPEEVKKRKKAVLFCLSEDKKNIILEEGKEILVGDVGQTVDDPYATFVKMLPDKDCRYALYDATYETKESKKEDLVFIFWAPESAPLKSKMIYASSKDAIKKKLTGIKHELQANCYEEVKDRCTLAEKLGGSAVISLEGKPL.

Ala2 carries the post-translational modification N-acetylalanine. Position 3 is a phosphoserine; by NRK (Ser3). Residues 4–153 enclose the ADF-H domain; sequence GVAVSDGVIK…KDRCTLAEKL (150 aa). A Phosphoserine modification is found at Ser8. Lys13 is modified (N6-acetyllysine). Residue Thr25 is modified to Phosphothreonine. The short motif at 30 to 34 is the Nuclear localization signal element; it reads KKRKK. The residue at position 41 (Ser41) is a Phosphoserine. Phosphothreonine is present on Thr63. The residue at position 68 (Tyr68) is a Phosphotyrosine. Lys73 bears the N6-acetyllysine mark. A Phosphotyrosine modification is found at Tyr82. Phosphoserine is present on Ser108. Residue Lys132 forms a Glycyl lysine isopeptide (Lys-Gly) (interchain with G-Cter in SUMO2) linkage. Tyr140 bears the Phosphotyrosine mark. Lys144 carries the N6-acetyllysine modification. Ser156 is subject to Phosphoserine.

Belongs to the actin-binding proteins ADF family. Can bind G- and F-actin in a 1:1 ratio of cofilin to actin. It is a major component of intranuclear and cytoplasmic actin rods. Interacts with the subcortical maternal complex (SCMC) via interaction with TLE6 isoform 1 and NLRP5. Interacts with C9orf72. In terms of assembly, (Microbial infection) Interacts with human respiratory syncytial virus (HRSV) matrix protein; this interaction probably facilitates viral replication. Inactivated by phosphorylation on Ser-3. Phosphorylated on Ser-3 in resting cells. Dephosphorylated by PDXP/chronophin; this restores its activity in promoting actin filament depolymerization. The phosphorylation of Ser-24 may prevent recognition of the nuclear localization signal. Phosphorylated via a ARRB1-RAC1-LIMK1-PAK1 cascade upon active ligand stimulation of atypical chemokine receptor ACKR2. In terms of tissue distribution, widely distributed in various tissues.

It is found in the nucleus matrix. Its subcellular location is the cytoplasm. The protein localises to the cytoskeleton. The protein resides in the cell projection. It localises to the ruffle membrane. It is found in the lamellipodium membrane. Its subcellular location is the lamellipodium. The protein localises to the growth cone. The protein resides in the axon. In terms of biological role, binds to F-actin and exhibits pH-sensitive F-actin depolymerizing activity. In conjunction with the subcortical maternal complex (SCMC), plays an essential role for zygotes to progress beyond the first embryonic cell divisions via regulation of actin dynamics. Required for the centralization of the mitotic spindle and symmetric division of zygotes. Plays a role in the regulation of cell morphology and cytoskeletal organization in epithelial cells. Required for the up-regulation of atypical chemokine receptor ACKR2 from endosomal compartment to cell membrane, increasing its efficiency in chemokine uptake and degradation. Required for neural tube morphogenesis and neural crest cell migration. This chain is Cofilin-1 (CFL1), found in Homo sapiens (Human).